The sequence spans 183 residues: NRR repressor homolog 1 (183 aa).

Disordered stretches follow at residues 1-40 (MEGV…VVGG) and 66-183 (NGEE…PTDQ). The segment covering 31–40 (EEEEGAVVGG) has biased composition (acidic residues). The segment covering 70–79 (GAAGGDGDGA) has biased composition (gly residues). Acidic residues predominate over residues 101 to 115 (FEFEEAAAGAGDDDA). Residues 135-145 (AVEKRRTEKEA) are compositionally biased toward basic and acidic residues. A compositionally biased stretch (acidic residues) spans 150-161 (AEDDDDEQEGGE). Basic and acidic residues predominate over residues 163–183 (VEGKEEHRPGRRVEAHGPTDQ).

The protein belongs to the NPR1-interactor family. Interacts with NPR1/NH1. Interacts with NPR3/NH3.

The protein resides in the nucleus. Its function is as follows. Binds to and represses NPR1/NH1-mediated transcriptional activation of LG2 in vitro. In Oryza sativa subsp. japonica (Rice), this protein is NRR repressor homolog 1.